Consider the following 140-residue polypeptide: Relaxin-3 (140 aa).

An N-terminal signal peptide occupies residues 1 to 23 (MATRGLLLASWALLGALVLQAEA). Cystine bridges form between Cys33–Cys127, Cys45–Cys140, and Cys126–Cys131. Positions 53-116 (ADILAHDPLG…GSPGVVRGSR (64 aa)) are cleaved as a propeptide — connecting peptide.

Belongs to the insulin family. In terms of assembly, heterodimer of a B chain and an A chain linked by two disulfide bonds. In terms of tissue distribution, highly abundant expression is detected in neurons within the ventomedial dorsal tegmental nucleus and the laterally central gray alpha of the pons. Also detected at much lower levels within the hippocampus.

The protein localises to the secreted. In terms of biological role, may play a role in neuropeptide signaling processes. Ligand for LGR7, relaxin-3 receptor-1 and relaxin-3 receptor-2. The sequence is that of Relaxin-3 (Rln3) from Rattus norvegicus (Rat).